A 618-amino-acid chain; its full sequence is MDKNTITGLVLIGILLVGFSFLSRPSEEQIAAQKRYYDSIAVVQQQEEALRAKTEAALANEKEETAADSASLFFSATKGKEAFTTIQNNLVEITLDNKGGRVYSALLKNYMGQDKKPVVLFNGSDASMNFNFYNKKGALQTKDFYFEAVNKTDSSVTMRLAADSASYIDFIYTLKPDNYLMSFVIKATGMDGKLAASTNYVDISWSQRARQIEKGYTYENRLADLTYKYTGDDVDNLSASKDDEKSVSERLDWIAFKNQFFSSVFIAEQDFEKTTVKSKMEKQGSGYIKDYSAEMSTFFDPTGKQPTDMYFYFGPNHYKTLTALDKGREEKWELNNLVYLGWPLIRWINKWITINVFDWLSGWGLSMGIVLLLLTIMVKIVVFPATWKTYMSSAKMRVLKPKIDEINKKYPKQEDAMKKQQEVMGLYSQYGVSPMGGCLPMLLQFPILMALFMFVPSAIELRQQSFLWADDLSTYDAFITFPFHIPFLGNHLSLFCLLMTVTNILNTKYTMQQQDTGAQPQMAAMKWMMYLMPIMFLFVLNDYPSGLNYYYFISTLISVVTMIILRRTTDENKLLTELEAKKKDPKQMKKTGFAARLEAMQKQQEQLAKERANKQNKK.

Transmembrane regions (helical) follow at residues Lys-3–Ser-23, Trp-363–Phe-383, Leu-439–Ile-459, Phe-478–Leu-498, Pro-520–Leu-540, and Ser-545–Leu-565.

It belongs to the OXA1/ALB3/YidC family. Type 1 subfamily. In terms of assembly, interacts with the Sec translocase complex via SecD. Specifically interacts with transmembrane segments of nascent integral membrane proteins during membrane integration.

It is found in the cell inner membrane. Required for the insertion and/or proper folding and/or complex formation of integral membrane proteins into the membrane. Involved in integration of membrane proteins that insert both dependently and independently of the Sec translocase complex, as well as at least some lipoproteins. Aids folding of multispanning membrane proteins. This is Membrane protein insertase YidC from Bacteroides fragilis (strain ATCC 25285 / DSM 2151 / CCUG 4856 / JCM 11019 / LMG 10263 / NCTC 9343 / Onslow / VPI 2553 / EN-2).